The chain runs to 174 residues: Large ribosomal subunit protein uL10 (174 aa).

It belongs to the universal ribosomal protein uL10 family. As to quaternary structure, part of the ribosomal stalk of the 50S ribosomal subunit. The N-terminus interacts with L11 and the large rRNA to form the base of the stalk. The C-terminus forms an elongated spine to which L12 dimers bind in a sequential fashion forming a multimeric L10(L12)X complex.

Forms part of the ribosomal stalk, playing a central role in the interaction of the ribosome with GTP-bound translation factors. This Methylibium petroleiphilum (strain ATCC BAA-1232 / LMG 22953 / PM1) protein is Large ribosomal subunit protein uL10.